The primary structure comprises 549 residues: Membrane protein insertase YidC (549 aa).

Residues 9–29 (LRLILAIALSFLFIALYSYFF) traverse the membrane as a helical segment. Residues 37–51 (TETTKQETTNNHTAT) are compositionally biased toward low complexity. A disordered region spans residues 37–56 (TETTKQETTNNHTATSPTAS). 5 helical membrane passes run 328–348 (VIEYGLITFFAKGVFVLLDYL), 351–371 (FVGNWGWAIILLTIIVRIILY), 417–437 (GANPLGGCLPLILQIPVFFAI), 452–472 (WVLWIHDLSIMDPYFILPLLM), and 498–518 (LLPLLFTIFLITFPAGLVLYW).

The protein belongs to the OXA1/ALB3/YidC family. Type 1 subfamily. As to quaternary structure, interacts with the Sec translocase complex via SecD. Specifically interacts with transmembrane segments of nascent integral membrane proteins during membrane integration.

The protein resides in the cell inner membrane. Its function is as follows. Required for the insertion and/or proper folding and/or complex formation of integral membrane proteins into the membrane. Involved in integration of membrane proteins that insert both dependently and independently of the Sec translocase complex, as well as at least some lipoproteins. Aids folding of multispanning membrane proteins. The protein is Membrane protein insertase YidC of Helicobacter pylori (strain J99 / ATCC 700824) (Campylobacter pylori J99).